Reading from the N-terminus, the 265-residue chain is Capsule polysaccharide export inner-membrane protein CtrC (265 aa).

Helical transmembrane passes span 37–57 (IGFLWLFVEPLLLTLVMVLMW), 64–84 (NVSALNIVAFTLTGYPMMMMW), 121–141 (IAGATIAQVVIMFALVIIGWI), 147–167 (IFYMLLAWLLMAMFAVGLGLV), 178–198 (FGKVWSTISFVMMPLSGVFFF), and 236–256 (NPWYILLCNLVLLLLGLAVVA). Residues 37–258 (IGFLWLFVEP…LLGLAVVARF (222 aa)) form the ABC transmembrane type-2 domain.

The protein belongs to the ABC-2 integral membrane protein family.

It localises to the cell inner membrane. Its function is as follows. May form an ATP-driven capsule polysaccharide export apparatus, in association with the CtrB and CtrD proteins. This is Capsule polysaccharide export inner-membrane protein CtrC (ctrC) from Neisseria meningitidis serogroup A / serotype 4A (strain DSM 15465 / Z2491).